The following is a 518-amino-acid chain: Bifunctional purine biosynthesis protein PurH (518 aa).

The region spanning 1–146 is the MGS-like domain; that stretch reads MSPIALLSVS…KNHQDVLVVT (146 aa).

The protein belongs to the PurH family.

It catalyses the reaction (6R)-10-formyltetrahydrofolate + 5-amino-1-(5-phospho-beta-D-ribosyl)imidazole-4-carboxamide = 5-formamido-1-(5-phospho-D-ribosyl)imidazole-4-carboxamide + (6S)-5,6,7,8-tetrahydrofolate. The catalysed reaction is IMP + H2O = 5-formamido-1-(5-phospho-D-ribosyl)imidazole-4-carboxamide. The protein operates within purine metabolism; IMP biosynthesis via de novo pathway; 5-formamido-1-(5-phospho-D-ribosyl)imidazole-4-carboxamide from 5-amino-1-(5-phospho-D-ribosyl)imidazole-4-carboxamide (10-formyl THF route): step 1/1. It functions in the pathway purine metabolism; IMP biosynthesis via de novo pathway; IMP from 5-formamido-1-(5-phospho-D-ribosyl)imidazole-4-carboxamide: step 1/1. The protein is Bifunctional purine biosynthesis protein PurH of Prochlorococcus marinus (strain NATL1A).